Consider the following 406-residue polypeptide: Tryptophan synthase beta chain (406 aa).

K95 carries the post-translational modification N6-(pyridoxal phosphate)lysine.

The protein belongs to the TrpB family. As to quaternary structure, tetramer of two alpha and two beta chains. Requires pyridoxal 5'-phosphate as cofactor.

It catalyses the reaction (1S,2R)-1-C-(indol-3-yl)glycerol 3-phosphate + L-serine = D-glyceraldehyde 3-phosphate + L-tryptophan + H2O. It functions in the pathway amino-acid biosynthesis; L-tryptophan biosynthesis; L-tryptophan from chorismate: step 5/5. Functionally, the beta subunit is responsible for the synthesis of L-tryptophan from indole and L-serine. In Azotobacter vinelandii (strain DJ / ATCC BAA-1303), this protein is Tryptophan synthase beta chain.